Reading from the N-terminus, the 136-residue chain is Nucleoside diphosphate kinase (136 aa).

Residues K10, F58, R86, T92, R104, and N114 each contribute to the ATP site. Residue H117 is the Pros-phosphohistidine intermediate of the active site.

The protein belongs to the NDK family. Homotetramer. It depends on Mg(2+) as a cofactor.

It localises to the cytoplasm. The enzyme catalyses a 2'-deoxyribonucleoside 5'-diphosphate + ATP = a 2'-deoxyribonucleoside 5'-triphosphate + ADP. It catalyses the reaction a ribonucleoside 5'-diphosphate + ATP = a ribonucleoside 5'-triphosphate + ADP. Its function is as follows. Major role in the synthesis of nucleoside triphosphates other than ATP. The ATP gamma phosphate is transferred to the NDP beta phosphate via a ping-pong mechanism, using a phosphorylated active-site intermediate. The polypeptide is Nucleoside diphosphate kinase (Mycobacterium marinum (strain ATCC BAA-535 / M)).